We begin with the raw amino-acid sequence, 393 residues long: Homogentisate phytyltransferase 1, chloroplastic (393 aa).

A chloroplast-targeting transit peptide spans 1 to 36; that stretch reads MESLLSSSSLVSAAGGFCWKKQNLKLHSLSEIRVLR. 9 helical membrane passes run 108–128, 133–153, 170–190, 205–227, 232–252, 271–291, 314–334, 338–358, and 371–391; these read TVIG…EKVS, LLFT…IYIV, YLPL…VASF, PLFW…LPLL, FALV…QIAF, LIFA…FKDI, VFWT…LVGA, FIWS…TLWA, and ITSC…LLPF.

It belongs to the UbiA prenyltransferase family.

It is found in the plastid. Its subcellular location is the chloroplast membrane. The catalysed reaction is phytyl diphosphate + homogentisate + H(+) = 2-methyl-6-phytyl-1,4-benzene-1,4-diol + CO2 + diphosphate. Its pathway is cofactor biosynthesis; tocopherol biosynthesis. Functionally, involved in the synthesis of tocopherol (vitamin E). Catalyzes the condensation of homogentisate and phytyl diphosphate to form dimethylphytylhydrquinone. Low activity with geranylgeranyl diphosphate as substrate, but no activity with farnesyl diphosphate or solanesyl diphosphate. Tocopherol functions to limit lipid oxidation during seed desiccation, quiescence and germination and early seedling development. Protects thylakoid membrane lipids from photooxidation and is required for low-temperature adaptation. The polypeptide is Homogentisate phytyltransferase 1, chloroplastic (HPT1) (Arabidopsis thaliana (Mouse-ear cress)).